Consider the following 81-residue polypeptide: Elsinochrome C biosynthesis cluster protein SNOG_08613 (81 aa).

Its function is as follows. Part of the gene cluster that mediates the biosynthesis of elsinochrome C, a perelyenequinone phytotoxin structurally similar to cercosporin. The first step of elsinochrome C biosynthesis is performed by the polyketide synthase elcA which catalyzes the formation of nor-toralactone. The starter unit acyltransferase (SAT) domain of elcA initiates polyketide extension by the selective utilization of acetyl-CoA, which is elongated to the heptaketide in the beta-ketoacyl synthase (KS) domain by successive condensations with six malonyl units introduced by the malonyl acyltransferase (MAT) domain. The product template (PT) domain catalyzes C4-C9 and C2-C11 aldol cyclizations and dehydrations to a trihydroxynaphthalene, which is thought to be delivered to the thioesterase (TE) domain for product release. The bifunctional enzyme elcB then methylates nor-toralactone to toralactone before conducting an unusual oxidative aromatic ring opening. The next step in perylenequinone biosynthesis is an O-methylation at the nascent OH-6 of the elcB product performed by the O-methyltransferase elcD. The oxidative coupling of the two monomeric naphthol units in perylenequinone biosynthesis is catalyzed by the FAD-dependent monooxygenase elcE and the multicopper oxidase elcG. ElcG might catalyze the first intermolecular coupling in a regio- and stereo-selective manner via a phenol radical coupling mechanism and the elcE could forge the second C-C bond intramolecularly via a hydride transfer mechanism. The fasciclin domain-containing protein elcF might also play a role duting this step. The last piece of the puzzle in the biosynthesis of elsinochrome C is the additional annulation by enolate coupling to afford the dihydrobenzo(ghi)perylenequinone system, catalyzed by the FAD-dependent monooxygenase elcH. This is Elsinochrome C biosynthesis cluster protein SNOG_08613 from Phaeosphaeria nodorum (strain SN15 / ATCC MYA-4574 / FGSC 10173) (Glume blotch fungus).